Reading from the N-terminus, the 92-residue chain is Small ribosomal subunit protein uS19 (92 aa).

It belongs to the universal ribosomal protein uS19 family.

Functionally, protein S19 forms a complex with S13 that binds strongly to the 16S ribosomal RNA. The chain is Small ribosomal subunit protein uS19 from Shigella boydii serotype 18 (strain CDC 3083-94 / BS512).